The primary structure comprises 621 residues: Chaperone protein DnaK (621 aa).

At Thr-179 the chain carries Phosphothreonine; by autocatalysis. A compositionally biased stretch (polar residues) spans 583-605 (SQVQDTQGAAQGQSQGNPQQTAD). The disordered stretch occupies residues 583-621 (SQVQDTQGAAQGQSQGNPQQTADNRGKVVDAEIVDENKE). A compositionally biased stretch (basic and acidic residues) spans 606-621 (NRGKVVDAEIVDENKE).

This sequence belongs to the heat shock protein 70 family.

In terms of biological role, acts as a chaperone. The sequence is that of Chaperone protein DnaK from Endomicrobium trichonymphae.